An 827-amino-acid chain; its full sequence is Beta-galactosidase 1 (827 aa).

Positions Met-1–Ala-25 are cleaved as a signal peptide. Catalysis depends on Glu-187, which acts as the Proton donor. Asn-198 and Asn-249 each carry an N-linked (GlcNAc...) asparagine glycan. Residue Glu-259 is the Nucleophile of the active site. Asn-260, Asn-366, Asn-392, Asn-502, Asn-520, Asn-578, Asn-586, and Asn-615 each carry an N-linked (GlcNAc...) asparagine glycan. Positions Gly-746–Cys-827 constitute an SUEL-type lectin domain.

It belongs to the glycosyl hydrolase 35 family.

Its subcellular location is the secreted. It localises to the extracellular space. It is found in the apoplast. The catalysed reaction is Hydrolysis of terminal non-reducing beta-D-galactose residues in beta-D-galactosides.. This is Beta-galactosidase 1 from Oryza sativa subsp. japonica (Rice).